A 125-amino-acid polypeptide reads, in one-letter code: Small ribosomal subunit protein uS12m (125 aa).

It belongs to the universal ribosomal protein uS12 family.

It is found in the mitochondrion. Functionally, protein S12 is involved in the translation initiation step. This Brassica napus (Rape) protein is Small ribosomal subunit protein uS12m (RPS12).